The following is a 200-amino-acid chain: LexA repressor (200 aa).

Catalysis depends on for autocatalytic cleavage activity residues S121 and K158.

It belongs to the peptidase S24 family. Homodimer.

The enzyme catalyses Hydrolysis of Ala-|-Gly bond in repressor LexA.. In terms of biological role, binds a consensus sequence 5'-TGTTC-N(4)-GAACA-3'; some genes have a tandem consensus sequence and their binding is cooperative. Binds to the promoters of a number of genes, including lexA and splB. Represses a number of genes involved in the response to DNA damage (SOS response). This Opitutus terrae (strain DSM 11246 / JCM 15787 / PB90-1) protein is LexA repressor.